We begin with the raw amino-acid sequence, 719 residues long: Pesticidal crystal protein Cry1Ib (719 aa).

Belongs to the delta endotoxin family.

Functionally, promotes colloidosmotic lysis by binding to the midgut epithelial cells of certain coleopteran and lepidopteran species. Active on Plutella xylostella but not on Bombyx mori. This is Pesticidal crystal protein Cry1Ib (cry1Ib) from Bacillus thuringiensis subsp. entomocidus.